We begin with the raw amino-acid sequence, 185 residues long: Ribosome-recycling factor (185 aa).

Belongs to the RRF family.

Its subcellular location is the cytoplasm. In terms of biological role, responsible for the release of ribosomes from messenger RNA at the termination of protein biosynthesis. May increase the efficiency of translation by recycling ribosomes from one round of translation to another. This chain is Ribosome-recycling factor, found in Halorhodospira halophila (strain DSM 244 / SL1) (Ectothiorhodospira halophila (strain DSM 244 / SL1)).